Consider the following 652-residue polypeptide: Probable L-type lectin-domain containing receptor kinase S.5 (652 aa).

The first 20 residues, 1–20 (MRFSLAWKLLFLILTCKIET), serve as a signal peptide directing secretion. Topologically, residues 21–266 (QVKCLKFDFP…EGLKIDGDGN (246 aa)) are extracellular. The legume-lectin like stretch occupies residues 24-257 (CLKFDFPGFN…LNCVRSWSFE (234 aa)). 8 N-linked (GlcNAc...) asparagine glycosylation sites follow: Asn-33, Asn-91, Asn-97, Asn-100, Asn-122, Asn-139, Asn-201, and Asn-244. Residues 267–287 (MLWLWITIPIVFIVGIGAFLG) form a helical membrane-spanning segment. The Cytoplasmic segment spans residues 288–652 (ALYLRSRSKA…INSLTELTGR (365 aa)). Residues 330–622 (FGAENKLGQG…PDVPTERPAF (293 aa)) form the Protein kinase domain. ATP contacts are provided by residues 336 to 344 (LGQGGFGMV) and Lys-357. Catalysis depends on Asp-455, which acts as the Proton acceptor.

In the C-terminal section; belongs to the protein kinase superfamily. Ser/Thr protein kinase family. The protein in the N-terminal section; belongs to the leguminous lectin family.

Its subcellular location is the cell membrane. The catalysed reaction is L-seryl-[protein] + ATP = O-phospho-L-seryl-[protein] + ADP + H(+). It carries out the reaction L-threonyl-[protein] + ATP = O-phospho-L-threonyl-[protein] + ADP + H(+). The protein is Probable L-type lectin-domain containing receptor kinase S.5 (LECRKS5) of Arabidopsis thaliana (Mouse-ear cress).